Here is a 214-residue protein sequence, read N- to C-terminus: Large ribosomal subunit protein uL16 (214 aa).

Position 32 is a citrulline (Arg32). Lys175 is covalently cross-linked (Glycyl lysine isopeptide (Lys-Gly) (interchain with G-Cter in SUMO2)). Lys188 participates in a covalent cross-link: Glycyl lysine isopeptide (Lys-Gly) (interchain with G-Cter in ubiquitin).

It belongs to the universal ribosomal protein uL16 family. As to quaternary structure, component of the large ribosomal subunit. Mature ribosomes consist of a small (40S) and a large (60S) subunit. The 40S subunit contains about 33 different proteins and 1 molecule of RNA (18S). The 60S subunit contains about 49 different proteins and 3 molecules of RNA (28S, 5.8S and 5S). In terms of processing, citrullinated by PADI4. Ufmylated by UFL1.

The protein localises to the cytoplasm. Its function is as follows. Component of the large ribosomal subunit. Plays a role in the formation of actively translating ribosomes. May play a role in the embryonic brain development. This is Large ribosomal subunit protein uL16 from Bos taurus (Bovine).